A 243-amino-acid polypeptide reads, in one-letter code: Carboxy-S-adenosyl-L-methionine synthase (243 aa).

S-adenosyl-L-methionine contacts are provided by residues Tyr-40, 65-67 (GCS), 90-91 (DN), 118-119 (DI), Asn-133, and Arg-200.

The protein belongs to the class I-like SAM-binding methyltransferase superfamily. Cx-SAM synthase family. In terms of assembly, homodimer.

The catalysed reaction is prephenate + S-adenosyl-L-methionine = carboxy-S-adenosyl-L-methionine + 3-phenylpyruvate + H2O. In terms of biological role, catalyzes the conversion of S-adenosyl-L-methionine (SAM) to carboxy-S-adenosyl-L-methionine (Cx-SAM). This chain is Carboxy-S-adenosyl-L-methionine synthase, found in Shewanella halifaxensis (strain HAW-EB4).